Consider the following 447-residue polypeptide: UDP-N-acetylmuramoyl-L-alanyl-D-glutamate--2,6-diaminopimelate ligase (447 aa).

UDP-N-acetyl-alpha-D-muramoyl-L-alanyl-D-glutamate is bound at residue T21. 74-80 (GTNGKTT) is an ATP binding site. UDP-N-acetyl-alpha-D-muramoyl-L-alanyl-D-glutamate is bound by residues 117–118 (TT), S144, Q150, and R152. K184 is subject to N6-carboxylysine. Meso-2,6-diaminopimelate contacts are provided by residues R340, 364–367 (DNPR), G415, and E419. The short motif at 364 to 367 (DNPR) is the Meso-diaminopimelate recognition motif element.

It belongs to the MurCDEF family. MurE subfamily. Mg(2+) is required as a cofactor. In terms of processing, carboxylation is probably crucial for Mg(2+) binding and, consequently, for the gamma-phosphate positioning of ATP.

Its subcellular location is the cytoplasm. The enzyme catalyses UDP-N-acetyl-alpha-D-muramoyl-L-alanyl-D-glutamate + meso-2,6-diaminopimelate + ATP = UDP-N-acetyl-alpha-D-muramoyl-L-alanyl-gamma-D-glutamyl-meso-2,6-diaminopimelate + ADP + phosphate + H(+). It functions in the pathway cell wall biogenesis; peptidoglycan biosynthesis. Functionally, catalyzes the addition of meso-diaminopimelic acid to the nucleotide precursor UDP-N-acetylmuramoyl-L-alanyl-D-glutamate (UMAG) in the biosynthesis of bacterial cell-wall peptidoglycan. This Helicobacter pylori (strain J99 / ATCC 700824) (Campylobacter pylori J99) protein is UDP-N-acetylmuramoyl-L-alanyl-D-glutamate--2,6-diaminopimelate ligase.